Consider the following 331-residue polypeptide: Thiamine thiazole synthase (331 aa).

Substrate contacts are provided by residues C86, 107–108 (EA), G115, and V183. C220 is modified (2,3-didehydroalanine (Cys)). Substrate is bound by residues D222, H237, M289, and 299 to 301 (RMG).

Belongs to the THI4 family. In terms of assembly, homooctamer. Requires Fe cation as cofactor. During the catalytic reaction, a sulfide is transferred from Cys-220 to a reaction intermediate, generating a dehydroalanine residue.

The protein localises to the cytoplasm. It is found in the nucleus. The enzyme catalyses [ADP-thiazole synthase]-L-cysteine + glycine + NAD(+) = [ADP-thiazole synthase]-dehydroalanine + ADP-5-ethyl-4-methylthiazole-2-carboxylate + nicotinamide + 3 H2O + 2 H(+). Its function is as follows. Involved in biosynthesis of the thiamine precursor thiazole. Catalyzes the conversion of NAD and glycine to adenosine diphosphate 5-(2-hydroxyethyl)-4-methylthiazole-2-carboxylic acid (ADT), an adenylated thiazole intermediate. The reaction includes an iron-dependent sulfide transfer from a conserved cysteine residue of the protein to a thiazole intermediate. The enzyme can only undergo a single turnover, which suggests it is a suicide enzyme. May have additional roles in adaptation to various stress conditions and in DNA damage tolerance. The chain is Thiamine thiazole synthase from Emericella nidulans (strain FGSC A4 / ATCC 38163 / CBS 112.46 / NRRL 194 / M139) (Aspergillus nidulans).